The sequence spans 181 residues: Probable inosine/xanthosine triphosphatase (181 aa).

Mg(2+) is bound at residue Asp65.

This sequence belongs to the YjjX NTPase family. As to quaternary structure, homodimer. Mg(2+) serves as cofactor. The cofactor is Mn(2+).

It carries out the reaction XTP + H2O = XDP + phosphate + H(+). The catalysed reaction is ITP + H2O = IDP + phosphate + H(+). Functionally, phosphatase that hydrolyzes non-canonical purine nucleotides such as XTP and ITP to their respective diphosphate derivatives. Probably excludes non-canonical purines from DNA/RNA precursor pool, thus preventing their incorporation into DNA/RNA and avoiding chromosomal lesions. The sequence is that of Probable inosine/xanthosine triphosphatase from Caldivirga maquilingensis (strain ATCC 700844 / DSM 13496 / JCM 10307 / IC-167).